An 85-amino-acid chain; its full sequence is Small ribosomal subunit protein uS17 (85 aa).

It belongs to the universal ribosomal protein uS17 family. As to quaternary structure, part of the 30S ribosomal subunit.

In terms of biological role, one of the primary rRNA binding proteins, it binds specifically to the 5'-end of 16S ribosomal RNA. This Agathobacter rectalis (strain ATCC 33656 / DSM 3377 / JCM 17463 / KCTC 5835 / VPI 0990) (Eubacterium rectale) protein is Small ribosomal subunit protein uS17.